The chain runs to 387 residues: 8-amino-7-oxononanoate synthase (387 aa).

Arg20 is a substrate binding site. Residue Gly107–Tyr108 coordinates pyridoxal 5'-phosphate. Residue His132 coordinates substrate. Pyridoxal 5'-phosphate contacts are provided by Ser181, His209, and Thr238. The residue at position 241 (Lys241) is an N6-(pyridoxal phosphate)lysine. Residue Thr355 participates in substrate binding.

This sequence belongs to the class-II pyridoxal-phosphate-dependent aminotransferase family. BioF subfamily. As to quaternary structure, homodimer. The cofactor is pyridoxal 5'-phosphate.

It carries out the reaction 6-carboxyhexanoyl-[ACP] + L-alanine + H(+) = (8S)-8-amino-7-oxononanoate + holo-[ACP] + CO2. The protein operates within cofactor biosynthesis; biotin biosynthesis. Functionally, catalyzes the decarboxylative condensation of pimeloyl-[acyl-carrier protein] and L-alanine to produce 8-amino-7-oxononanoate (AON), [acyl-carrier protein], and carbon dioxide. This Dechloromonas aromatica (strain RCB) protein is 8-amino-7-oxononanoate synthase.